A 332-amino-acid chain; its full sequence is Glycerol-3-phosphate dehydrogenase [NAD(P)+] (332 aa).

NADPH is bound by residues S11, F12, K32, and K106. Residues K106, G137, and S139 each coordinate sn-glycerol 3-phosphate. A141 lines the NADPH pocket. Positions 192, 245, 255, 256, and 257 each coordinate sn-glycerol 3-phosphate. Catalysis depends on K192, which acts as the Proton acceptor. Position 256 (R256) interacts with NADPH. Residues V280 and E282 each coordinate NADPH.

It belongs to the NAD-dependent glycerol-3-phosphate dehydrogenase family.

Its subcellular location is the cytoplasm. The catalysed reaction is sn-glycerol 3-phosphate + NAD(+) = dihydroxyacetone phosphate + NADH + H(+). It catalyses the reaction sn-glycerol 3-phosphate + NADP(+) = dihydroxyacetone phosphate + NADPH + H(+). It participates in membrane lipid metabolism; glycerophospholipid metabolism. Functionally, catalyzes the reduction of the glycolytic intermediate dihydroxyacetone phosphate (DHAP) to sn-glycerol 3-phosphate (G3P), the key precursor for phospholipid synthesis. The protein is Glycerol-3-phosphate dehydrogenase [NAD(P)+] of Staphylococcus aureus (strain Mu3 / ATCC 700698).